A 112-amino-acid chain; its full sequence is Reprimo-like protein (112 aa).

The chain crosses the membrane as a helical span at residues 59 to 79; sequence VVQIAVLCVLSLTVLFGIFFL.

It belongs to the reprimo family.

It localises to the membrane. This is Reprimo-like protein (rprml) from Xenopus laevis (African clawed frog).